The following is an 87-amino-acid chain: Phosphocarrier protein HPr (87 aa).

Positions 1-87 (MAEKTFTITA…EEVIKEGLGE (87 aa)) constitute an HPr domain. His15 functions as the Pros-phosphohistidine intermediate in the catalytic mechanism. Ser46 carries the post-translational modification Phosphoserine; by HPrK/P.

It belongs to the HPr family.

Its subcellular location is the cytoplasm. Its activity is regulated as follows. Phosphorylation on Ser-46 inhibits the phosphoryl transfer from enzyme I to HPr. Its function is as follows. General (non sugar-specific) component of the phosphoenolpyruvate-dependent sugar phosphotransferase system (sugar PTS). This major carbohydrate active-transport system catalyzes the phosphorylation of incoming sugar substrates concomitantly with their translocation across the cell membrane. The phosphoryl group from phosphoenolpyruvate (PEP) is transferred to the phosphoryl carrier protein HPr by enzyme I. Phospho-HPr then transfers it to the PTS EIIA domain. Functionally, P-Ser-HPr interacts with the catabolite control protein A (CcpA), forming a complex that binds to DNA at the catabolite response elements cre, operator sites preceding a large number of catabolite-regulated genes. Thus, P-Ser-HPr is a corepressor in carbon catabolite repression (CCR), a mechanism that allows bacteria to coordinate and optimize the utilization of available carbon sources. P-Ser-HPr also plays a role in inducer exclusion, in which it probably interacts with several non-PTS permeases and inhibits their transport activity. The chain is Phosphocarrier protein HPr (ptsH) from Halalkalibacterium halodurans (strain ATCC BAA-125 / DSM 18197 / FERM 7344 / JCM 9153 / C-125) (Bacillus halodurans).